We begin with the raw amino-acid sequence, 258 residues long: Large ribosomal subunit protein bL19m (258 aa).

Positions 235-258 (SKGLTGGVGGGGGKQKGQESKKKN) are disordered. Positions 238 to 249 (LTGGVGGGGGKQ) are enriched in gly residues.

Belongs to the bacterial ribosomal protein bL19 family. As to quaternary structure, component of the mitochondrial large ribosomal subunit (mt-LSU). Mature N.crassa 74S mitochondrial ribosomes consist of a small (37S) and a large (54S) subunit. The 37S small subunit contains a 16S ribosomal RNA (16S mt-rRNA) and 32 different proteins. The 54S large subunit contains a 23S rRNA (23S mt-rRNA) and 42 different proteins.

Its subcellular location is the mitochondrion. Component of the mitochondrial ribosome (mitoribosome), a dedicated translation machinery responsible for the synthesis of mitochondrial genome-encoded proteins, including at least some of the essential transmembrane subunits of the mitochondrial respiratory chain. The mitoribosomes are attached to the mitochondrial inner membrane and translation products are cotranslationally integrated into the membrane. This is Large ribosomal subunit protein bL19m (img1) from Neurospora crassa (strain ATCC 24698 / 74-OR23-1A / CBS 708.71 / DSM 1257 / FGSC 987).